Consider the following 358-residue polypeptide: Aminomethyltransferase (358 aa).

The protein belongs to the GcvT family. In terms of assembly, the glycine cleavage system is composed of four proteins: P, T, L and H.

The catalysed reaction is N(6)-[(R)-S(8)-aminomethyldihydrolipoyl]-L-lysyl-[protein] + (6S)-5,6,7,8-tetrahydrofolate = N(6)-[(R)-dihydrolipoyl]-L-lysyl-[protein] + (6R)-5,10-methylene-5,6,7,8-tetrahydrofolate + NH4(+). The glycine cleavage system catalyzes the degradation of glycine. This Francisella philomiragia subsp. philomiragia (strain ATCC 25017 / CCUG 19701 / FSC 153 / O#319-036) protein is Aminomethyltransferase.